A 122-amino-acid chain; its full sequence is MNLIQQLEAEAIAEFKAKKEIPDFRAGDTVRVGVRVVEGERTRVQAYEGVCIARSNRGLGSNFTVRKISFGEGVERVFPLYSPNIDSITVVRRGVVRRAKLYYLRGRTGKSARIAERKVTKA.

The protein belongs to the bacterial ribosomal protein bL19 family.

This protein is located at the 30S-50S ribosomal subunit interface and may play a role in the structure and function of the aminoacyl-tRNA binding site. The chain is Large ribosomal subunit protein bL19 from Novosphingobium aromaticivorans (strain ATCC 700278 / DSM 12444 / CCUG 56034 / CIP 105152 / NBRC 16084 / F199).